The sequence spans 201 residues: Thylakoid membrane protein slr1796 (201 aa).

The chain crosses the membrane as a helical span at residues 16–36; sequence FLIVSLAFAMLLLGIWGTLPF.

The protein localises to the cellular thylakoid membrane. The protein is Thylakoid membrane protein slr1796 of Synechocystis sp. (strain ATCC 27184 / PCC 6803 / Kazusa).